The primary structure comprises 138 residues: Basic phospholipase A2 BP-II (138 aa).

Residues 1–16 (MRTLWIMAVLLVGVDG) form the signal peptide. 7 disulfides stabilise this stretch: Cys42-Cys132, Cys44-Cys60, Cys59-Cys112, Cys65-Cys138, Cys66-Cys105, Cys73-Cys98, and Cys91-Cys103. The Ca(2+) site is built by Gly45 and Gly47. The active site involves His63. Asp106 is a catalytic residue.

The protein belongs to the phospholipase A2 family. Group II subfamily. K49 sub-subfamily. As to quaternary structure, exists as a monomer in both solution and crystal states. In the presence of SDS or probably in the presence of phospholipids, assembles to form SDS-resistant stable oligomers. It depends on Ca(2+) as a cofactor. As to expression, expressed by the venom gland.

The protein localises to the secreted. The catalysed reaction is a 1,2-diacyl-sn-glycero-3-phosphocholine + H2O = a 1-acyl-sn-glycero-3-phosphocholine + a fatty acid + H(+). Snake venom phospholipase A2 (PLA2) that shows anticoagulant activities, strong myolytic activity, infiltration of polymorphonuclear cells, and edema in stromal tissues. Induces cell death of Jurkat cells in a concentration-dependent manner. Shows a low phospholipase A2 activity. PLA2 catalyzes the calcium-dependent hydrolysis of the 2-acyl groups in 3-sn-phosphoglycerides. This is Basic phospholipase A2 BP-II from Protobothrops flavoviridis (Habu).